A 286-amino-acid chain; its full sequence is MAGRYDRNPFDEDDVNPFAGGSVPPASNSRMPPLPHEPGFYNDRGATVDIPLDSTKDMKKKEKELQAKEAELNKRESELRRREEAASRAGIVIEEKNWPPFFPIIHHDISNEIPIHLQRMQYLAFSSLLGLAACLFWNIIATTAAWIKGAGVMIWLLAIIYFISGVPGAYVLWYRPLYNAMRTESALKFGWFFLFYLIHILFCIWSAVAPPFPFKGKSLAGILPAIDVIGNNAIVGIFYFIGFGLFCLESLLSVVVIQQVYMYFRGSGKAAEMKREAARGAMRSAF.

Basic and acidic residues-rich tracts occupy residues 1–10 (MAGRYDRNPF) and 54–63 (STKDMKKKEK). Positions 1 to 63 (MAGRYDRNPF…STKDMKKKEK (63 aa)) are disordered. The Cytoplasmic segment spans residues 1–126 (MAGRYDRNPF…LQRMQYLAFS (126 aa)). Positions 52-89 (LDSTKDMKKKEKELQAKEAELNKRESELRRREEAASRA) form a coiled coil. 4 consecutive transmembrane segments (helical) span residues 127–147 (SLLGLAACLFWNIIATTAAWI), 152–172 (VMIWLLAIIYFISGVPGAYVL), 189–209 (FGWFFLFYLIHILFCIWSAVA), and 237–257 (IFYFIGFGLFCLESLLSVVVI). Residues 258 to 286 (QQVYMYFRGSGKAAEMKREAARGAMRSAF) are Cytoplasmic-facing.

The protein belongs to the SCAMP family.

The protein resides in the cell membrane. It is found in the cytoplasmic vesicle. The protein localises to the secretory vesicle membrane. In terms of biological role, probably involved in membrane trafficking. The chain is Secretory carrier-associated membrane protein 2 (SCAMP2) from Oryza sativa subsp. japonica (Rice).